The primary structure comprises 148 residues: UPF0260 protein PC1_1943 (148 aa).

The protein belongs to the UPF0260 family.

The polypeptide is UPF0260 protein PC1_1943 (Pectobacterium carotovorum subsp. carotovorum (strain PC1)).